Consider the following 345-residue polypeptide: tRNA N6-adenosine threonylcarbamoyltransferase (345 aa).

H117 and H121 together coordinate Fe cation. Residues 140–144 (LVSGG), D173, G186, and N279 each bind substrate. D307 contacts Fe cation.

Belongs to the KAE1 / TsaD family. The cofactor is Fe(2+).

The protein localises to the cytoplasm. The catalysed reaction is L-threonylcarbamoyladenylate + adenosine(37) in tRNA = N(6)-L-threonylcarbamoyladenosine(37) in tRNA + AMP + H(+). Required for the formation of a threonylcarbamoyl group on adenosine at position 37 (t(6)A37) in tRNAs that read codons beginning with adenine. Is involved in the transfer of the threonylcarbamoyl moiety of threonylcarbamoyl-AMP (TC-AMP) to the N6 group of A37, together with TsaE and TsaB. TsaD likely plays a direct catalytic role in this reaction. This is tRNA N6-adenosine threonylcarbamoyltransferase from Verminephrobacter eiseniae (strain EF01-2).